A 345-amino-acid polypeptide reads, in one-letter code: Dihydroorotate dehydrogenase (quinone) (345 aa).

FMN-binding positions include 65 to 69 (AGLDK) and threonine 89. Lysine 69 lines the substrate pocket. 114–118 (NRMGF) provides a ligand contact to substrate. The FMN site is built by asparagine 142 and asparagine 175. Asparagine 175 lines the substrate pocket. Serine 178 acts as the Nucleophile in catalysis. Asparagine 180 contacts substrate. Lysine 220 and threonine 248 together coordinate FMN. 249–250 (NT) contacts substrate. Residues glycine 271, glycine 300, and 321–322 (YT) contribute to the FMN site.

Belongs to the dihydroorotate dehydrogenase family. Type 2 subfamily. In terms of assembly, monomer. It depends on FMN as a cofactor.

The protein localises to the cell membrane. The enzyme catalyses (S)-dihydroorotate + a quinone = orotate + a quinol. Its pathway is pyrimidine metabolism; UMP biosynthesis via de novo pathway; orotate from (S)-dihydroorotate (quinone route): step 1/1. In terms of biological role, catalyzes the conversion of dihydroorotate to orotate with quinone as electron acceptor. This Burkholderia cenocepacia (strain ATCC BAA-245 / DSM 16553 / LMG 16656 / NCTC 13227 / J2315 / CF5610) (Burkholderia cepacia (strain J2315)) protein is Dihydroorotate dehydrogenase (quinone).